A 172-amino-acid polypeptide reads, in one-letter code: Adenine phosphoribosyltransferase (172 aa).

Belongs to the purine/pyrimidine phosphoribosyltransferase family. As to quaternary structure, homodimer.

Its subcellular location is the cytoplasm. It carries out the reaction AMP + diphosphate = 5-phospho-alpha-D-ribose 1-diphosphate + adenine. It participates in purine metabolism; AMP biosynthesis via salvage pathway; AMP from adenine: step 1/1. Its function is as follows. Catalyzes a salvage reaction resulting in the formation of AMP, that is energically less costly than de novo synthesis. This is Adenine phosphoribosyltransferase from Nostoc punctiforme (strain ATCC 29133 / PCC 73102).